The following is an 85-amino-acid chain: Protein MANBAL (85 aa).

The helical transmembrane segment at Tyr24–Ile44 threads the bilayer. Basic and acidic residues predominate over residues Glu49–Lys64. A disordered region spans residues Glu49 to Arg85. A compositionally biased stretch (basic residues) spans Lys75–Arg85.

This sequence belongs to the UPF0239 family.

The protein resides in the membrane. The sequence is that of Protein MANBAL (Manbal) from Mus musculus (Mouse).